The chain runs to 545 residues: Ribulokinase (545 aa).

It belongs to the ribulokinase family.

The catalysed reaction is D-ribulose + ATP = D-ribulose 5-phosphate + ADP + H(+). It catalyses the reaction L-ribulose + ATP = L-ribulose 5-phosphate + ADP + H(+). It participates in carbohydrate degradation; L-arabinose degradation via L-ribulose; D-xylulose 5-phosphate from L-arabinose (bacterial route): step 2/3. The protein is Ribulokinase of Staphylococcus aureus (strain MSSA476).